A 90-amino-acid chain; its full sequence is Small ribosomal subunit protein bS20 (90 aa).

The segment at 1–25 is disordered; the sequence is MANSAQARKRARQAAKANSHNSALR.

The protein belongs to the bacterial ribosomal protein bS20 family.

Binds directly to 16S ribosomal RNA. The polypeptide is Small ribosomal subunit protein bS20 (Burkholderia orbicola (strain MC0-3)).